The chain runs to 57 residues: Three-finger toxin Tschuditoxin-I (57 aa).

Cystine bridges form between C3–C22, C17–C39, and C41–C52.

Expressed by the venom gland.

It is found in the secreted. Functionally, produces peripheral paralysis by blocking neuromuscular transmission at the postsynaptic site. Binds to and inhibits the endogenous nicotinic acetylcholine receptors (nAChR). This neurotoxin is lethal to mice by intraperitoneal or intravenous injection. The protein is Three-finger toxin Tschuditoxin-I of Micrurus tschudii (Desert coral snake).